We begin with the raw amino-acid sequence, 171 residues long: ATP synthase subunit b (171 aa).

A helical membrane pass occupies residues 12–34 (FALNLNLFETNVINLAVVAFGLY).

It belongs to the ATPase B chain family. F-type ATPases have 2 components, F(1) - the catalytic core - and F(0) - the membrane proton channel. F(1) has five subunits: alpha(3), beta(3), gamma(1), delta(1), epsilon(1). F(0) has four main subunits: a(1), b(1), b'(1) and c(10-14). The alpha and beta chains form an alternating ring which encloses part of the gamma chain. F(1) is attached to F(0) by a central stalk formed by the gamma and epsilon chains, while a peripheral stalk is formed by the delta, b and b' chains.

It is found in the cellular thylakoid membrane. In terms of biological role, f(1)F(0) ATP synthase produces ATP from ADP in the presence of a proton or sodium gradient. F-type ATPases consist of two structural domains, F(1) containing the extramembraneous catalytic core and F(0) containing the membrane proton channel, linked together by a central stalk and a peripheral stalk. During catalysis, ATP synthesis in the catalytic domain of F(1) is coupled via a rotary mechanism of the central stalk subunits to proton translocation. Component of the F(0) channel, it forms part of the peripheral stalk, linking F(1) to F(0). The protein is ATP synthase subunit b of Prochlorococcus marinus (strain SARG / CCMP1375 / SS120).